Consider the following 176-residue polypeptide: Transcription factor 21 (176 aa).

The interval 1–84 (MSTGSISDVD…QVQRNAANAR (84 aa)) is disordered. The segment covering 31–44 (GTSNESTEDSSNCE) has biased composition (polar residues). Residues 76 to 128 (VQRNAANARERARMRVLSKAFSRLKTTLPWVPPDTKLSKLDTLRLASSYIAHL) form the bHLH domain.

Efficient DNA binding requires dimerization with another bHLH protein. In terms of tissue distribution, expressed in the cranial paraxial mesoderm from 20 hpf and subsequently becomes restricted to the pharyngeal mesoderm that will form the muscle. Expression in the proepicardial organ is first seen at 40hpf in a cluster of cells between the myocardium and yolk. Also expressed in the developing arches. Expression begins to surround the heart by day 3 of development, and by 96 hpf, expression is restricted to the outer epicardial layer surrounding the myocardium.

The protein resides in the nucleus. Its function is as follows. Involved in epithelial-mesenchymal interactions in kidney and lung morphogenesis that include epithelial differentiation and branching morphogenesis. The sequence is that of Transcription factor 21 from Danio rerio (Zebrafish).